A 375-amino-acid polypeptide reads, in one-letter code: tRNA-specific 2-thiouridylase MnmA (375 aa).

ATP contacts are provided by residues 18-25 and M44; that span reads GMSGGVDS. The interval 104–106 is interaction with target base in tRNA; the sequence is NPD. C109 acts as the Nucleophile in catalysis. An intrachain disulfide couples C109 to C206. G134 contacts ATP. Residues 156-158 form an interaction with tRNA region; the sequence is KDQ. The active-site Cysteine persulfide intermediate is C206. Residues 318–319 form an interaction with tRNA region; that stretch reads RY.

It belongs to the MnmA/TRMU family.

The protein localises to the cytoplasm. The catalysed reaction is S-sulfanyl-L-cysteinyl-[protein] + uridine(34) in tRNA + AH2 + ATP = 2-thiouridine(34) in tRNA + L-cysteinyl-[protein] + A + AMP + diphosphate + H(+). In terms of biological role, catalyzes the 2-thiolation of uridine at the wobble position (U34) of tRNA, leading to the formation of s(2)U34. This Colwellia psychrerythraea (strain 34H / ATCC BAA-681) (Vibrio psychroerythus) protein is tRNA-specific 2-thiouridylase MnmA.